A 65-amino-acid chain; its full sequence is Large ribosomal subunit protein bL35 (65 aa).

A disordered region spans residues 1–29; the sequence is MPKMKTHSGAKKRFKLTGSGKVKRQQANR.

It belongs to the bacterial ribosomal protein bL35 family.

The polypeptide is Large ribosomal subunit protein bL35 (Kocuria rhizophila (strain ATCC 9341 / DSM 348 / NBRC 103217 / DC2201)).